A 502-amino-acid chain; its full sequence is Probable cytosol aminopeptidase (502 aa).

Residues K270 and D275 each contribute to the Mn(2+) site. The active site involves K282. D293, D352, and E354 together coordinate Mn(2+). The active site involves R356.

Belongs to the peptidase M17 family. Mn(2+) is required as a cofactor.

The protein resides in the cytoplasm. It carries out the reaction Release of an N-terminal amino acid, Xaa-|-Yaa-, in which Xaa is preferably Leu, but may be other amino acids including Pro although not Arg or Lys, and Yaa may be Pro. Amino acid amides and methyl esters are also readily hydrolyzed, but rates on arylamides are exceedingly low.. It catalyses the reaction Release of an N-terminal amino acid, preferentially leucine, but not glutamic or aspartic acids.. Its function is as follows. Presumably involved in the processing and regular turnover of intracellular proteins. Catalyzes the removal of unsubstituted N-terminal amino acids from various peptides. The sequence is that of Probable cytosol aminopeptidase from Desulfotalea psychrophila (strain LSv54 / DSM 12343).